The sequence spans 1165 residues: Sperm-associated antigen 5 (1165 aa).

The segment at 1 to 23 (MWRVKTLNLGLSPSPQKGKPAMS) is disordered. Residues Ser12, Ser14, Ser66, Ser161, Ser321, Ser333, and Ser342 each carry the phosphoserine modification. A disordered region spans residues 431–457 (TVPHREARDSSTQTDSSPCGVTKTPKH). A compositionally biased stretch (polar residues) spans 440 to 449 (SSTQTDSSPC). The segment at 453-821 (KTPKHLQDSK…LRDTVDSLRA (369 aa)) is interaction with KNSTRN. A coiled-coil region spans residues 509–856 (RSKTLVSSCS…LLAEQLQSLT (348 aa)). The tract at residues 875-907 (PSTGSAPAQEHPLSNDSSISEQTPTAAVDEVPE) is disordered. Over residues 876–897 (STGSAPAQEHPLSNDSSISEQT) the composition is skewed to polar residues. A coiled-coil region spans residues 937-1146 (DLEKSLAEMS…IQHVYETLLS (210 aa)). Position 946 is a phosphoserine; by GSK3-beta (Ser946).

Homodimer, with a globular head domain and a long stalk. Homooligomer; the globular head domains associate, resulting in aster-like structures. Binds to microtubules in the mitotic spindle. Interacts with DCLRE1B/Apollo. Part of an astrin (SPAG5)-kinastrin (SKAP) complex containing KNSTRN, SPAG5, PLK1, DYNLL1 and SGO2A. Interacts with KNSTRN. Interacts with RPTOR; this interaction competes with RPTOR binding to MTOR, resulting in decreased mTORC1 formation. Interacts with G3BP1. The complex formed with G3BP1 and RPTOR is increased by oxidative stress. Interacts with OSBPL8, PCM1 and CDK5RAP2. Interacts (via C-terminus) with NUMA1 (via C-terminus); this interaction promotes the recruitment of SPAG5 to the microtubules at spindle poles in a dynein-dynactin-dependent manner. Interacts with DYNLL1. Phosphorylated by AURKA. Detected in testis, but not in the other tissues tested.

The protein localises to the cytoplasm. The protein resides in the cytoskeleton. It is found in the spindle. Its subcellular location is the spindle pole. It localises to the chromosome. The protein localises to the centromere. The protein resides in the kinetochore. It is found in the midbody. Its subcellular location is the microtubule organizing center. It localises to the centrosome. The protein localises to the centriolar satellite. Functionally, essential component of the mitotic spindle required for normal chromosome segregation and progression into anaphase. Required for chromosome alignment, normal timing of sister chromatid segregation, and maintenance of spindle pole architecture. In complex with SKAP, promotes stable microtubule-kinetochore attachments. May contribute to the regulation of separase activity. May regulate AURKA localization to mitotic spindle, but not to centrosomes and CCNB1 localization to both mitotic spindle and centrosomes. Involved in centriole duplication. Required for CDK5RAP22, CEP152, WDR62 and CEP63 centrosomal localization and promotes the centrosomal localization of CDK2. In non-mitotic cells, upon stress induction, inhibits mammalian target of rapamycin complex 1 (mTORC1) association and recruits the mTORC1 component RPTOR to stress granules (SGs), thereby preventing mTORC1 hyperactivation-induced apoptosis. May enhance GSK3B-mediated phosphorylation of other substrates, such as MAPT/TAU. The polypeptide is Sperm-associated antigen 5 (Spag5) (Mus musculus (Mouse)).